The chain runs to 74 residues: Conotoxin TsMLCL-04 (74 aa).

An N-terminal signal peptide occupies residues 1–19 (MLCLPVFIILLLLASPAAP). The propeptide occupies 20–60 (NPLETRIQRDLIRAALEDADMKTNERFLEGVISTIKDFAGK).

The protein belongs to the conotoxin T superfamily. In terms of processing, contains 2 disulfide bonds that can be either 'C1-C3, C2-C4' or 'C1-C4, C2-C3', since these disulfide connectivities have been observed for conotoxins with cysteine framework V (for examples, see AC P0DQQ7 and AC P81755). Expressed by the venom duct.

The protein localises to the secreted. The chain is Conotoxin TsMLCL-04 from Conus tessulatus (Tessellate cone).